Reading from the N-terminus, the 799-residue chain is Mitochondrial intermediate peptidase (799 aa).

Residue histidine 562 coordinates Zn(2+). The active site involves glutamate 563. Zn(2+) contacts are provided by histidine 566 and histidine 569.

This sequence belongs to the peptidase M3 family. Zn(2+) serves as cofactor.

It is found in the mitochondrion matrix. It catalyses the reaction Release of an N-terminal octapeptide as second stage of processing of some proteins imported into the mitochondrion.. Its function is as follows. Cleaves proteins, imported into the mitochondrion, to their mature size. While most mitochondrial precursor proteins are processed to the mature form in one step by mitochondrial processing peptidase (MPP), the sequential cleavage by MIP of an octapeptide after initial processing by MPP is a required step for a subgroup of nuclear-encoded precursor proteins destined for the matrix or the inner membrane. The polypeptide is Mitochondrial intermediate peptidase (oct1) (Aspergillus niger (strain ATCC MYA-4892 / CBS 513.88 / FGSC A1513)).